The primary structure comprises 126 residues: MKHLGRHVLAEICGCDFDILNDIEKVEEIMVNAALEAGAEVRECVFHKFSPQGVSGVVVISESHLAIHTWPELGYAAVDVFTCGDKVNPWDACNYLSERFSAKHMTAREMKRGIIPETYLKEVANL.

The active-site Schiff-base intermediate with substrate; via pyruvic acid is the Ser63. Ser63 is modified (pyruvic acid (Ser); by autocatalysis). His68 serves as the catalytic Proton acceptor; for processing activity. The active-site Proton donor; for catalytic activity is the Cys83.

It belongs to the prokaryotic AdoMetDC family. Type 1 subfamily. In terms of assembly, heterotetramer of two alpha and two beta chains arranged as a dimer of alpha/beta heterodimers. Pyruvate is required as a cofactor. In terms of processing, is synthesized initially as an inactive proenzyme. Formation of the active enzyme involves a self-maturation process in which the active site pyruvoyl group is generated from an internal serine residue via an autocatalytic post-translational modification. Two non-identical subunits are generated from the proenzyme in this reaction, and the pyruvate is formed at the N-terminus of the alpha chain, which is derived from the carboxyl end of the proenzyme. The post-translation cleavage follows an unusual pathway, termed non-hydrolytic serinolysis, in which the side chain hydroxyl group of the serine supplies its oxygen atom to form the C-terminus of the beta chain, while the remainder of the serine residue undergoes an oxidative deamination to produce ammonia and the pyruvoyl group blocking the N-terminus of the alpha chain.

It catalyses the reaction S-adenosyl-L-methionine + H(+) = S-adenosyl 3-(methylsulfanyl)propylamine + CO2. Its pathway is amine and polyamine biosynthesis; S-adenosylmethioninamine biosynthesis; S-adenosylmethioninamine from S-adenosyl-L-methionine: step 1/1. Its function is as follows. Catalyzes the decarboxylation of S-adenosylmethionine to S-adenosylmethioninamine (dcAdoMet), the propylamine donor required for the synthesis of the polyamines spermine and spermidine from the diamine putrescine. This chain is S-adenosylmethionine decarboxylase proenzyme, found in Pelotomaculum thermopropionicum (strain DSM 13744 / JCM 10971 / SI).